A 260-amino-acid polypeptide reads, in one-letter code: Circadian clock-controlled protein daywake (260 aa).

The first 25 residues, 1–25 (MQLTGASMFLVWVGLLSWVSCRVDA), serve as a signal peptide directing secretion.

This sequence belongs to the TO family. Epidermis of newly eclosed adults.

Its function is as follows. Component of the circadian clock or downstream effector of clock function. Required for suppressing daytime sleep (siesta) under ambient environmental temperatures. Part of a heat avoidance mechanism that modulates daytime sleep behavior under different environmental temperatures to minimize the risk of heat exposure. Under cooler ambient temperatures, suppresses daytime sleep (siesta) and thus allows for longer periods of daytime activity. This chain is Circadian clock-controlled protein daywake, found in Drosophila melanogaster (Fruit fly).